We begin with the raw amino-acid sequence, 395 residues long: Probable inactive serine/threonine-protein kinase DDB_G0293746 (395 aa).

A Protein kinase domain is found at 9–395; that stretch reads YSEIDLISDN…ITQFIIDYLF (387 aa). ATP is bound by residues 15–23 and Lys-54; that span reads ISDNPFKNY. Residues 213-266 are disordered; it reads NSSLSSLSSSTSSSSSSSSSTNCNNNTTENNNNNYNNNNNNNNNNNNNNNNNSL.

It belongs to the protein kinase superfamily. Ser/Thr protein kinase family.

In Dictyostelium discoideum (Social amoeba), this protein is Probable inactive serine/threonine-protein kinase DDB_G0293746.